The chain runs to 128 residues: Aspartate 1-decarboxylase (128 aa).

Ser-25 (schiff-base intermediate with substrate; via pyruvic acid) is an active-site residue. At Ser-25 the chain carries Pyruvic acid (Ser). A substrate-binding site is contributed by Thr-57. The active-site Proton donor is the Tyr-58. 73–75 (GSA) is a substrate binding site.

The protein belongs to the PanD family. In terms of assembly, heterooctamer of four alpha and four beta subunits. Requires pyruvate as cofactor. Post-translationally, is synthesized initially as an inactive proenzyme, which is activated by self-cleavage at a specific serine bond to produce a beta-subunit with a hydroxyl group at its C-terminus and an alpha-subunit with a pyruvoyl group at its N-terminus.

It localises to the cytoplasm. The catalysed reaction is L-aspartate + H(+) = beta-alanine + CO2. It functions in the pathway cofactor biosynthesis; (R)-pantothenate biosynthesis; beta-alanine from L-aspartate: step 1/1. Functionally, catalyzes the pyruvoyl-dependent decarboxylation of aspartate to produce beta-alanine. This Burkholderia ambifaria (strain ATCC BAA-244 / DSM 16087 / CCUG 44356 / LMG 19182 / AMMD) (Burkholderia cepacia (strain AMMD)) protein is Aspartate 1-decarboxylase.